A 125-amino-acid chain; its full sequence is Small ribosomal subunit protein uS12 (125 aa).

A disordered region spans residues 1–30; sequence MPTISQLVRKPRAAKPLKSKVPALGNSPQK. Basic residues predominate over residues 9–18; sequence RKPRAAKPLK. Position 89 is a 3-methylthioaspartic acid (D89). The tract at residues 103–125 is disordered; the sequence is DTAGVKDRKQGRSKYGAKKPKSA. The span at 113–125 shows a compositional bias: basic residues; sequence GRSKYGAKKPKSA.

The protein belongs to the universal ribosomal protein uS12 family. In terms of assembly, part of the 30S ribosomal subunit. Contacts proteins S8 and S17. May interact with IF1 in the 30S initiation complex.

Its function is as follows. With S4 and S5 plays an important role in translational accuracy. In terms of biological role, interacts with and stabilizes bases of the 16S rRNA that are involved in tRNA selection in the A site and with the mRNA backbone. Located at the interface of the 30S and 50S subunits, it traverses the body of the 30S subunit contacting proteins on the other side and probably holding the rRNA structure together. The combined cluster of proteins S8, S12 and S17 appears to hold together the shoulder and platform of the 30S subunit. The sequence is that of Small ribosomal subunit protein uS12 from Nitrosospira multiformis (strain ATCC 25196 / NCIMB 11849 / C 71).